The primary structure comprises 207 residues: Low-molecular weight cobalt-containing nitrile hydratase subunit alpha (207 aa).

Co(3+) is bound by residues C109, C112, S113, and C114.

It belongs to the nitrile hydratase subunit alpha family. Heterodimer of an alpha and a beta chain. The cofactor is Co(3+).

The catalysed reaction is an aliphatic primary amide = an aliphatic nitrile + H2O. In terms of biological role, NHase catalyzes the hydration of various nitrile compounds to the corresponding amides. This chain is Low-molecular weight cobalt-containing nitrile hydratase subunit alpha, found in Rhodococcus rhodochrous.